Consider the following 696-residue polypeptide: Elongation factor G (696 aa).

One can recognise a tr-type G domain in the interval 8–282 (DRTRNIGIMA…AVIDYLPSPL (275 aa)). GTP is bound by residues 17 to 24 (AHIDAGKT), 81 to 85 (DTPGH), and 135 to 138 (NKMD).

This sequence belongs to the TRAFAC class translation factor GTPase superfamily. Classic translation factor GTPase family. EF-G/EF-2 subfamily.

It is found in the cytoplasm. Catalyzes the GTP-dependent ribosomal translocation step during translation elongation. During this step, the ribosome changes from the pre-translocational (PRE) to the post-translocational (POST) state as the newly formed A-site-bound peptidyl-tRNA and P-site-bound deacylated tRNA move to the P and E sites, respectively. Catalyzes the coordinated movement of the two tRNA molecules, the mRNA and conformational changes in the ribosome. The sequence is that of Elongation factor G from Staphylococcus saprophyticus subsp. saprophyticus (strain ATCC 15305 / DSM 20229 / NCIMB 8711 / NCTC 7292 / S-41).